Here is a 68-residue protein sequence, read N- to C-terminus: Large ribosomal subunit protein uL29 (68 aa).

The protein belongs to the universal ribosomal protein uL29 family.

The polypeptide is Large ribosomal subunit protein uL29 (Nitrobacter hamburgensis (strain DSM 10229 / NCIMB 13809 / X14)).